The sequence spans 257 residues: Transcription factor MYB4 (257 aa).

HTH myb-type domains are found at residues 9 to 61 (KMGL…INYL) and 62 to 116 (RPDI…KKRL). DNA-binding regions (H-T-H motif) lie at residues 37 to 61 (WRAL…INYL) and 89 to 112 (WSAI…HTHL). Residues 115–179 (RLDAPAQGGH…VAEEHGNAGI (65 aa)) are disordered. The span at 130–140 (GKKHKKPKSAK) shows a compositional bias: basic residues. Low complexity predominate over residues 141 to 170 (KPAAAAAAPPASPERSASSSVTESSMASSV).

It is found in the nucleus. Its function is as follows. Transcriptional activator involved in cold stress response. Regulates positively the expression of genes involved in reactive oxygen species (ROS) scavenging such as peroxidase and superoxide dismutase during cold stress. Transactivates a complex gene network that have major effects on stress tolerance and panicle development. The chain is Transcription factor MYB4 from Oryza sativa subsp. japonica (Rice).